We begin with the raw amino-acid sequence, 280 residues long: Dermonecrotic toxin LgSicTox-alphaIA1 (280 aa).

The active site involves H12. Mg(2+) is bound by residues E32 and D34. Residue H48 is the Nucleophile of the active site. Cysteines 52 and 58 form a disulfide. D92 is a binding site for Mg(2+).

The protein belongs to the arthropod phospholipase D family. Class I subfamily. The cofactor is Mg(2+). In terms of tissue distribution, expressed by the venom gland.

It localises to the secreted. It catalyses the reaction an N-(acyl)-sphingosylphosphocholine = an N-(acyl)-sphingosyl-1,3-cyclic phosphate + choline. The enzyme catalyses an N-(acyl)-sphingosylphosphoethanolamine = an N-(acyl)-sphingosyl-1,3-cyclic phosphate + ethanolamine. The catalysed reaction is a 1-acyl-sn-glycero-3-phosphocholine = a 1-acyl-sn-glycero-2,3-cyclic phosphate + choline. It carries out the reaction a 1-acyl-sn-glycero-3-phosphoethanolamine = a 1-acyl-sn-glycero-2,3-cyclic phosphate + ethanolamine. Dermonecrotic toxins cleave the phosphodiester linkage between the phosphate and headgroup of certain phospholipids (sphingolipid and lysolipid substrates), forming an alcohol (often choline) and a cyclic phosphate. This toxin acts on sphingomyelin (SM). It may also act on ceramide phosphoethanolamine (CPE), lysophosphatidylcholine (LPC) and lysophosphatidylethanolamine (LPE), but not on lysophosphatidylserine (LPS), and lysophosphatidylglycerol (LPG). It acts by transphosphatidylation, releasing exclusively cyclic phosphate products as second products. Induces dermonecrosis, hemolysis, increased vascular permeability, edema, inflammatory response, and platelet aggregation. The polypeptide is Dermonecrotic toxin LgSicTox-alphaIA1 (Loxosceles gaucho (Spider)).